We begin with the raw amino-acid sequence, 620 residues long: Glutathione-regulated potassium-efflux system protein KefC (620 aa).

At 1–3 (MDS) the chain is on the periplasmic side. A helical membrane pass occupies residues 4 to 24 (HTLLQALIYLGSAALIVPIAV). Residue Arg25 is a topological domain, cytoplasmic. A helical transmembrane segment spans residues 26–46 (LGLGSVLGYLIAGCIIGPWGL). The Periplasmic segment spans residues 47-53 (RLVTDAE). Residues 54 to 74 (SILHFAEIGVVLMLFVIGLEL) traverse the membrane as a helical segment. Topologically, residues 75–89 (DPQRLWKLRASVFGG) are cytoplasmic. Residues 90–110 (GALQMGVCGGLIGLFCMFLGL) traverse the membrane as a helical segment. The Periplasmic segment spans residues 111–113 (RWQ). A helical membrane pass occupies residues 114-134 (VAELIGMTLALSSTAIAMQAM). The Cytoplasmic portion of the chain corresponds to 135 to 148 (NERNLTVSQVGRSA). Residues 149–169 (FAVLLFQDIAAIPLVAMIPLL) form a helical membrane-spanning segment. Topologically, residues 170 to 177 (AASGASTT) are periplasmic. The helical transmembrane segment at 178–198 (LGAFALSALKVAGALALVVLL) threads the bilayer. Residues 199–213 (GRYVTRPALRFVARS) are Cytoplasmic-facing. Residues 214–233 (GLREVFSAVALFLVFGFGLL) traverse the membrane as a helical segment. Residues 234–236 (LEE) are Periplasmic-facing. A helical membrane pass occupies residues 237–254 (VGLSMAMGAFLAGVLLAS). At 255 to 269 (SEYRHALESDIEPFK) the chain is on the cytoplasmic side. A helical transmembrane segment spans residues 270-290 (GLLLGLFFIGVGMSIDFGTLV). Topologically, residues 291–293 (ENP) are periplasmic. The helical transmembrane segment at 294–314 (LRILLLLAGFLAIKIVMLWLV) threads the bilayer. The Cytoplasmic portion of the chain corresponds to 315–326 (ARPLGVPAKQRR). The chain crosses the membrane as a helical span at residues 327-347 (WFAVLLGQGSEFAFVVFGAAQ). The Periplasmic portion of the chain corresponds to 348–358 (MADVLEPEWAK). Residues 359–379 (ALTLAVALSMAATPIFLVLLT) form a helical membrane-spanning segment. Over 380–620 (RMEKTATGEA…ADEPEVKPSI (241 aa)) the chain is Cytoplasmic. Positions 399–518 (QPRVIVAGFG…AGVAMPERET (120 aa)) constitute an RCK N-terminal domain. Residues 599 to 620 (QGTAEGKHSGEVADEPEVKPSI) are disordered.

The protein belongs to the monovalent cation:proton antiporter 2 (CPA2) transporter (TC 2.A.37) family. KefC subfamily. In terms of assembly, homodimer. Interacts with the regulatory subunit KefF.

The protein localises to the cell inner membrane. In terms of biological role, pore-forming subunit of a potassium efflux system that confers protection against electrophiles. Catalyzes K(+)/H(+) antiport. The protein is Glutathione-regulated potassium-efflux system protein KefC of Salmonella typhimurium (strain LT2 / SGSC1412 / ATCC 700720).